A 500-amino-acid polypeptide reads, in one-letter code: L-arabinose isomerase (500 aa).

Residues Glu-306, Glu-333, His-350, and His-450 each contribute to the Mn(2+) site.

The protein belongs to the arabinose isomerase family. In terms of assembly, homohexamer. It depends on Mn(2+) as a cofactor.

It carries out the reaction beta-L-arabinopyranose = L-ribulose. The protein operates within carbohydrate degradation; L-arabinose degradation via L-ribulose; D-xylulose 5-phosphate from L-arabinose (bacterial route): step 1/3. Its function is as follows. Catalyzes the conversion of L-arabinose to L-ribulose. The sequence is that of L-arabinose isomerase from Salmonella newport (strain SL254).